The following is a 430-amino-acid chain: MFVDQVKINVKAGNGGNGIVAFRREKYVPNGGPAGGDGGRGGNVVLKVDPGLRTLMDFRYRHKFKADSGKNGMNKQMTGRSSQDLVISVPGGTIVRDLTTGRVIGDLTDNGQELVVAKGGRGGRGNMRFASPRNPAPEISENGEPGEEIELQLELKVLADVGLLGFPSVGKSTLLSVVTSAKPKIAEYHFTTLVPNLGMVQLDDGRDFVIADIPGLIEGASQGVGLGFEFLRHVERTRVLLHLVDMSGMTEEDPFTNFRQINEELKKYNPELLERRQIIVPTKMDLPGSDEELKKFEKQVRADERYADFEIFPISSITHNGLEKLVARTADVLEEIPQHSLIATSDEETEKTYEFSSEKDFTIENIDDVWVIEGEKIEKLFKMTDTTHDESLLRFARQMRGMGIDDELRRLGARNGDSVQILDFVFEFVE.

Residues 1-158 enclose the Obg domain; that stretch reads MFVDQVKINV…IELQLELKVL (158 aa). The disordered stretch occupies residues 122–143; it reads GGRGNMRFASPRNPAPEISENG. The OBG-type G domain maps to 159 to 334; the sequence is ADVGLLGFPS…LVARTADVLE (176 aa). GTP contacts are provided by residues 165 to 172, 190 to 194, 212 to 215, 282 to 285, and 315 to 317; these read GFPSVGKS, FTTLV, DIPG, TKMD, and SSI. Ser-172 and Thr-192 together coordinate Mg(2+). One can recognise an OCT domain in the interval 353–430; that stretch reads YEFSSEKDFT…ILDFVFEFVE (78 aa).

It belongs to the TRAFAC class OBG-HflX-like GTPase superfamily. OBG GTPase family. As to quaternary structure, monomer. Mg(2+) is required as a cofactor.

The protein resides in the cytoplasm. In terms of biological role, an essential GTPase which binds GTP, GDP and possibly (p)ppGpp with moderate affinity, with high nucleotide exchange rates and a fairly low GTP hydrolysis rate. Plays a role in control of the cell cycle, stress response, ribosome biogenesis and in those bacteria that undergo differentiation, in morphogenesis control. This chain is GTPase Obg, found in Pediococcus pentosaceus (strain ATCC 25745 / CCUG 21536 / LMG 10740 / 183-1w).